The primary structure comprises 420 residues: Phosphoribosylamine--glycine ligase (420 aa).

The ATP-grasp domain maps to 108–314 (KEIMVKYGVP…FAQNITDILD (207 aa)). 134–195 (IEKHGAPIVV…EEFLEGEEFS (62 aa)) provides a ligand contact to ATP. E284 and N286 together coordinate Mg(2+).

It belongs to the GARS family. Requires Mg(2+) as cofactor. Mn(2+) is required as a cofactor.

It carries out the reaction 5-phospho-beta-D-ribosylamine + glycine + ATP = N(1)-(5-phospho-beta-D-ribosyl)glycinamide + ADP + phosphate + H(+). The protein operates within purine metabolism; IMP biosynthesis via de novo pathway; N(1)-(5-phospho-D-ribosyl)glycinamide from 5-phospho-alpha-D-ribose 1-diphosphate: step 2/2. The polypeptide is Phosphoribosylamine--glycine ligase (Streptococcus pneumoniae serotype 4 (strain ATCC BAA-334 / TIGR4)).